A 648-amino-acid polypeptide reads, in one-letter code: Biosynthetic arginine decarboxylase (648 aa).

Lysine 109 bears the N6-(pyridoxal phosphate)lysine mark. 291-301 (IDVGGGLGIDF) lines the substrate pocket.

It belongs to the Orn/Lys/Arg decarboxylase class-II family. SpeA subfamily. Requires Mg(2+) as cofactor. Pyridoxal 5'-phosphate serves as cofactor.

The enzyme catalyses L-arginine + H(+) = agmatine + CO2. It functions in the pathway amine and polyamine biosynthesis; agmatine biosynthesis; agmatine from L-arginine: step 1/1. Catalyzes the biosynthesis of agmatine from arginine. This Prochlorococcus marinus (strain AS9601) protein is Biosynthetic arginine decarboxylase.